The following is an 88-amino-acid chain: Putative regulatory protein Npun_R3866 (88 aa).

The protein belongs to the RemA family.

In Nostoc punctiforme (strain ATCC 29133 / PCC 73102), this protein is Putative regulatory protein Npun_R3866.